The chain runs to 555 residues: Transmembrane protein 87A (555 aa).

A signal peptide spans 1–21; sequence MAAAAWLQVLPVILLLLGAHP. The Lumenal portion of the chain corresponds to 22–225; sequence SPLSFFSAGP…YEYLTLEDYP (204 aa). Disulfide bonds link Cys-74–Cys-128 and Cys-89–Cys-431. 4 N-linked (GlcNAc...) asparagine glycosylation sites follow: Asn-79, Asn-127, Asn-157, and Asn-160. The helical transmembrane segment at 226–246 threads the bilayer; that stretch reads LMIFFMVMCIVYVLFGVLWLA. Over 247 to 257 the chain is Cytoplasmic; sequence WSACYWRDLLR. A helical membrane pass occupies residues 258-278; sequence IQFWIGAVIFLGMLEKAVFYA. Residues 279 to 305 lie on the Lumenal side of the membrane; the sequence is EFQNIRYKGESVQGALILAELLSAVKR. The chain crosses the membrane as a helical span at residues 306 to 322; it reads SLARTLVIIVSLGYGIV. Residues 323 to 325 lie on the Cytoplasmic side of the membrane; that stretch reads KPR. The helical transmembrane segment at 326–346 threads the bilayer; that stretch reads LGVTLHKVVVAGALYLLFSGM. Residues 347–361 lie on the Lumenal side of the membrane; the sequence is EGVLRVTGAQTDLAS. The helical transmembrane segment at 362-382 threads the bilayer; it reads LAFIPLAFLDTALCWWIFISL. Residues 383 to 403 lie on the Cytoplasmic side of the membrane; it reads TQTMKLLKLRRNIVKLSLYRH. The chain crosses the membrane as a helical span at residues 404-424; that stretch reads FTNTLILAVAASIVFIIWTTM. Over 425–437 the chain is Lumenal; the sequence is KFRIVTCQSDWRE. Residues 438–458 form a helical membrane-spanning segment; the sequence is LWVDDAIWRLLFSMILFVIMV. Topologically, residues 459 to 555 are cytoplasmic; that stretch reads LWRPSANNQR…ITHFERSKME (97 aa). Positions 473 to 516 are disordered; the sequence is PLSEEEEEDEQKEPMLKESFEGMKMRSTKQEPNGNSKVNKAQED. Positions 484–496 are enriched in basic and acidic residues; it reads KEPMLKESFEGMK. Positions 502 to 511 are enriched in polar residues; sequence QEPNGNSKVN. At Ser-540 the chain carries Phosphoserine.

This sequence belongs to the LU7TM family. TMEM87 subfamily. As to quaternary structure, may interact with STOML3; STOML3 potentiates the mechanosensitive ion channel activity associated with TMEM87A.

It localises to the cell membrane. The protein localises to the golgi apparatus membrane. It is found in the cell projection. Its subcellular location is the ruffle. Functionally, potential monoatomic ion channel gated by mechanical force, implicated in normal touch sensitivity through the generation of mechanically activated currents. However, a direct channel activity is debated and an alternative could be that it functions as a chaperone for an unidentified mechanosensitive ion channel. Could also be involved in cell mechanosensitivity regulating cell adhesion and migration. May also be involved in retrograde transport from endosomes to the trans-Golgi network (TGN). The polypeptide is Transmembrane protein 87A (Homo sapiens (Human)).